A 341-amino-acid polypeptide reads, in one-letter code: Ketol-acid reductoisomerase (NADP(+)) (341 aa).

One can recognise a KARI N-terminal Rossmann domain in the interval 2-181 (VKVYYNGDAN…GSARAGVIET (180 aa)). Residues 25-28 (YGSQ), R48, S52, and 82-85 (DEHQ) each bind NADP(+). The active site involves H107. NADP(+) is bound at residue G133. The KARI C-terminal knotted domain occupies 182-327 (TFKEETETDL…RELRKMMPFV (146 aa)). Positions 190, 194, 226, and 230 each coordinate Mg(2+). Substrate is bound at residue S251.

It belongs to the ketol-acid reductoisomerase family. It depends on Mg(2+) as a cofactor.

The catalysed reaction is (2R)-2,3-dihydroxy-3-methylbutanoate + NADP(+) = (2S)-2-acetolactate + NADPH + H(+). The enzyme catalyses (2R,3R)-2,3-dihydroxy-3-methylpentanoate + NADP(+) = (S)-2-ethyl-2-hydroxy-3-oxobutanoate + NADPH + H(+). It participates in amino-acid biosynthesis; L-isoleucine biosynthesis; L-isoleucine from 2-oxobutanoate: step 2/4. The protein operates within amino-acid biosynthesis; L-valine biosynthesis; L-valine from pyruvate: step 2/4. Functionally, involved in the biosynthesis of branched-chain amino acids (BCAA). Catalyzes an alkyl-migration followed by a ketol-acid reduction of (S)-2-acetolactate (S2AL) to yield (R)-2,3-dihydroxy-isovalerate. In the isomerase reaction, S2AL is rearranged via a Mg-dependent methyl migration to produce 3-hydroxy-3-methyl-2-ketobutyrate (HMKB). In the reductase reaction, this 2-ketoacid undergoes a metal-dependent reduction by NADPH to yield (R)-2,3-dihydroxy-isovalerate. The protein is Ketol-acid reductoisomerase (NADP(+)) of Anoxybacillus flavithermus (strain DSM 21510 / WK1).